Consider the following 398-residue polypeptide: DNA-directed RNA polymerase III subunit RPC4 (398 aa).

The segment at 1 to 149 is disordered; the sequence is MSEGNAAGEP…IKKEKRETDE (149 aa). Ser-2 carries the N-acetylserine modification. Phosphoserine is present on Ser-42. Basic and acidic residues-rich tracts occupy residues 66-100, 116-128, and 140-149; these read KIKE…RGRP, MMKK…KTVD, and IKKEKRETDE. Residues Lys-68 and Lys-78 each participate in a glycyl lysine isopeptide (Lys-Gly) (interchain with G-Cter in SUMO2) cross-link. 3 positions are modified to omega-N-methylarginine: Arg-95, Arg-97, and Arg-99. Residues Lys-141, Lys-152, Lys-160, Lys-190, Lys-199, Lys-206, Lys-220, Lys-285, Lys-302, and Lys-396 each participate in a glycyl lysine isopeptide (Lys-Gly) (interchain with G-Cter in SUMO2) cross-link. Positions 191–244 are disordered; that stretch reads EESEEPEAKPFSAGPKEEDMEVDVPAVKVKEEPRDEEEEAKVKAPPRAARKTPG.

This sequence belongs to the eukaryotic RPC4/POLR3D RNA polymerase subunit family. As to quaternary structure, component of the RNA polymerase III complex consisting of 17 subunits: a ten-subunit horseshoe-shaped catalytic core composed of POLR3A/RPC1, POLR3B/RPC2, POLR1C/RPAC1, POLR1D/RPAC2, POLR3K/RPC10, POLR2E/RPABC1, POLR2F/RPABC2, POLR2H/RPABC3, POLR2K/RPABC4 and POLR2L/RPABC5; a mobile stalk composed of two subunits POLR3H/RPC8 and CRCP/RPC9, protruding from the core and functioning primarily in transcription initiation; and additional subunits homologous to general transcription factors of the RNA polymerase II machinery, POLR3C/RPC3-POLR3F/RPC6-POLR3G/RPC7 heterotrimer required for transcription initiation and POLR3D/RPC4-POLR3E/RPC5 heterodimer involved in both transcription initiation and termination. In terms of processing, sumoylation on Lys-141 can serve as a signal to mark misfolded Pol III for proteasomal degradation.

It localises to the nucleus. Its function is as follows. DNA-dependent RNA polymerase catalyzes the transcription of DNA into RNA using the four ribonucleoside triphosphates as substrates. Specific peripheric component of RNA polymerase III (Pol III) which synthesizes small non-coding RNAs including 5S rRNA, snRNAs, tRNAs and miRNAs from at least 500 distinct genomic loci. Enables recruitment of Pol III at transcription initiation site and drives transcription initiation from both type 2 and type 3 DNA promoters. Required for efficient transcription termination and reinitiation. Pol III plays a key role in sensing and limiting infection by intracellular bacteria and DNA viruses. Acts as nuclear and cytosolic DNA sensor involved in innate immune response. Can sense non-self dsDNA that serves as template for transcription into dsRNA. The non-self RNA polymerase III transcripts, such as Epstein-Barr virus-encoded RNAs (EBERs) induce type I interferon and NF-kappa-B through the RIG-I pathway. This Mus musculus (Mouse) protein is DNA-directed RNA polymerase III subunit RPC4.